Reading from the N-terminus, the 349-residue chain is Phenylalanine--tRNA ligase alpha subunit (349 aa).

E258 lines the Mg(2+) pocket.

This sequence belongs to the class-II aminoacyl-tRNA synthetase family. Phe-tRNA synthetase alpha subunit type 1 subfamily. In terms of assembly, tetramer of two alpha and two beta subunits. The cofactor is Mg(2+).

The protein localises to the cytoplasm. The enzyme catalyses tRNA(Phe) + L-phenylalanine + ATP = L-phenylalanyl-tRNA(Phe) + AMP + diphosphate + H(+). This chain is Phenylalanine--tRNA ligase alpha subunit, found in Rickettsia akari (strain Hartford).